A 428-amino-acid chain; its full sequence is Histone deacetylase 3 (428 aa).

The segment at 3 to 316 (NRTAYFYDPD…WTFETSLLVE (314 aa)) is histone deacetylase. His17, Gly21, and Lys25 together coordinate 1D-myo-inositol 1,4,5,6-tetrakisphosphate. His135 is a catalytic residue. Zn(2+) is bound by residues Asp170, His172, and Asp259. Position 265 (Arg265) interacts with 1D-myo-inositol 1,4,5,6-tetrakisphosphate. Residues 381-428 (PSDLLSYERPDEADPEERGSEENFSRPEAANEFYDGDHDHDKESDVEI) are disordered. Basic and acidic residues-rich tracts occupy residues 386 to 405 (SYERPDEADPEERGSEENFS) and 415 to 428 (DGDHDHDKESDVEI).

Belongs to the histone deacetylase family. HD type 1 subfamily.

Its subcellular location is the nucleus. The protein localises to the chromosome. It localises to the cytoplasm. It is found in the cytosol. The catalysed reaction is N(6)-acetyl-L-lysyl-[histone] + H2O = L-lysyl-[histone] + acetate. The enzyme catalyses N(6)-acetyl-L-lysyl-[protein] + H2O = L-lysyl-[protein] + acetate. It catalyses the reaction N(6)-(2E)-butenoyl-L-lysyl-[protein] + H2O = (2E)-2-butenoate + L-lysyl-[protein]. It carries out the reaction N(6)-(2-hydroxyisobutanoyl)-L-lysyl-[protein] + H2O = 2-hydroxy-2-methylpropanoate + L-lysyl-[protein]. The catalysed reaction is N(6)-[(S)-lactoyl]-L-lysyl-[protein] + H2O = (S)-lactate + L-lysyl-[protein]. With respect to regulation, inositol tetraphosphate (1D-myo-inositol 1,4,5,6-tetrakisphosphate) promotes the histone deacetylase activity by acting as an intermolecular glue between hdac3 and N-Cor repressor complex components. Histone deacetylase that catalyzes the deacetylation of lysine residues on the N-terminal part of the core histones (H2A, H2B, H3 and H4), and some other non-histone substrates. Histone deacetylation gives a tag for epigenetic repression and plays an important role in transcriptional regulation, cell cycle progression and developmental events. Histone deacetylases act via the formation of large multiprotein complexes, such as N-Cor repressor complex, which activate the histone deacetylase activity. Participates in the BCL6 transcriptional repressor activity by deacetylating the H3 'Lys-27' (H3K27) on enhancer elements, antagonizing EP300 acetyltransferase activity and repressing proximal gene expression. Also functions as a deacetylase for non-histone targets. In addition to protein deacetylase activity, also acts as a protein-lysine deacylase by recognizing other acyl groups: catalyzes removal of (2E)-butenoyl (crotonyl), lactoyl (lactyl) and 2-hydroxyisobutanoyl (2-hydroxyisobutyryl) acyl groups from lysine residues, leading to protein decrotonylation, delactylation and de-2-hydroxyisobutyrylation, respectively. This chain is Histone deacetylase 3 (hdac3), found in Danio rerio (Zebrafish).